We begin with the raw amino-acid sequence, 92 residues long: UPF0250 protein CGSHiEE_03170 (92 aa).

The protein belongs to the UPF0250 family.

The polypeptide is UPF0250 protein CGSHiEE_03170 (Haemophilus influenzae (strain PittEE)).